We begin with the raw amino-acid sequence, 327 residues long: uncharacterized protein (327 aa).

The region spanning 12–79 is the S4 RNA-binding domain; it reads KRLDEFLAKE…LKKELDLEIE (68 aa). The active site involves Asp-136.

Belongs to the pseudouridine synthase RluA family.

The catalysed reaction is a uridine in RNA = a pseudouridine in RNA. This is an uncharacterized protein from Helicobacter pylori (strain ATCC 700392 / 26695) (Campylobacter pylori).